The primary structure comprises 60 residues: MINNEAFNLSLEQKFQLQCLQQEYQELDREQTVNYLLETMQQIMVRDNLIRDLMKNSLLP.

This sequence to Synechococcus PCC 7942 NblA and some, to chloroplast ycf18.

The protein is Phycobilisome degradation protein NblA homolog 2 of Synechocystis sp. (strain ATCC 27184 / PCC 6803 / Kazusa).